Consider the following 96-residue polypeptide: Large ribosomal subunit protein bL21 (96 aa).

Residues 73–84 show a composition bias toward basic residues; that stretch reads KRRKRYQSRNGH. The interval 73–96 is disordered; the sequence is KRRKRYQSRNGHRQQMTQIEVVSL. The segment covering 85–96 has biased composition (polar residues); it reads RQQMTQIEVVSL.

The protein belongs to the bacterial ribosomal protein bL21 family. Part of the 50S ribosomal subunit. Contacts protein L20.

Functionally, this protein binds to 23S rRNA in the presence of protein L20. The protein is Large ribosomal subunit protein bL21 of Chlorobium luteolum (strain DSM 273 / BCRC 81028 / 2530) (Pelodictyon luteolum).